The sequence spans 634 residues: Threonine--tRNA ligase (634 aa).

The region spanning 1–61 is the TGS domain; that stretch reads MINIRFPDGS…NSNCELRLIT (61 aa). The catalytic stretch occupies residues 241-532; it reads DHRKIGKVLD…LIEHYAGNLP (292 aa). Zn(2+) contacts are provided by C332, H383, and H509.

Belongs to the class-II aminoacyl-tRNA synthetase family. As to quaternary structure, homodimer. It depends on Zn(2+) as a cofactor.

The protein resides in the cytoplasm. The catalysed reaction is tRNA(Thr) + L-threonine + ATP = L-threonyl-tRNA(Thr) + AMP + diphosphate + H(+). Functionally, catalyzes the attachment of threonine to tRNA(Thr) in a two-step reaction: L-threonine is first activated by ATP to form Thr-AMP and then transferred to the acceptor end of tRNA(Thr). Also edits incorrectly charged L-seryl-tRNA(Thr). The sequence is that of Threonine--tRNA ligase from Francisella tularensis subsp. novicida (strain U112).